The chain runs to 137 residues: Fatty acid-binding protein homolog 8 (137 aa).

The Nuclear localization signal signature appears at 24–34; the sequence is KEIGVGLLIRK.

It belongs to the calycin superfamily. Fatty-acid binding protein (FABP) family. Monomer. As to expression, intestine.

Its subcellular location is the lysosome. The protein localises to the nucleus. In terms of biological role, lysosomal lipid chaperone which binds to a wide range of unsaturated fatty acids, including high affinity binding to oleic acid and oleoylethanolamide, to transport them into the nucleus. As part of a lysosome-to-nucleus retrograde lipid signaling pathway, translocates into the nucleus where it activates the transcription of genes promoting longevity and activation of mitochondrial beta oxidation. This is Fatty acid-binding protein homolog 8 from Caenorhabditis elegans.